Reading from the N-terminus, the 234-residue chain is Glutathione S-transferase U16 (234 aa).

Residues 5–85 (EEVKLLGVWY…YIDETWNSSA (81 aa)) form the GST N-terminal domain. Glutathione is bound by residues 15–16 (SP), 42–43 (SK), 56–57 (KV), and 69–70 (ES). Residues 92–219 (HPYDRALARF…APEIEKVAEF (128 aa)) form the GST C-terminal domain.

The protein belongs to the GST superfamily. Tau family.

It is found in the cytoplasm. It localises to the cytosol. The enzyme catalyses RX + glutathione = an S-substituted glutathione + a halide anion + H(+). May be involved in the conjugation of reduced glutathione to a wide number of exogenous and endogenous hydrophobic electrophiles and have a detoxification role against certain herbicides. The polypeptide is Glutathione S-transferase U16 (GSTU16) (Arabidopsis thaliana (Mouse-ear cress)).